The chain runs to 993 residues: NACHT, LRR and PYD domains-containing protein 14 (993 aa).

The region spanning 81–403 (QTVVLQGAAG…FYLLRENLEE (323 aa)) is the NACHT domain. 87–94 (GAAGIGKT) lines the ATP pocket. LRR repeat units lie at residues 636–657 (DLKE…LKCK), 660–680 (KLRV…QKLS), 688–708 (SLVF…KSLC), 717–738 (SLER…VLSS), 745–765 (RLTH…KLLS), 774–795 (TLQS…HLST), 802–822 (SLVH…KLLC), 831–852 (NLQE…DLAS), and 859–879 (NLWS…NILC).

It belongs to the NLRP family. In terms of tissue distribution, detected in adult ovary and testis. Detected in oocytes and in germ cell elements in seminiferous tubules in adult testis (at protein level).

The protein resides in the cytoplasm. In terms of biological role, may be involved in inflammation and spermatogenesis. This chain is NACHT, LRR and PYD domains-containing protein 14 (Nlrp14), found in Mus musculus (Mouse).